The primary structure comprises 193 residues: Acyl carrier protein phosphodiesterase (193 aa).

The protein belongs to the AcpH family.

The catalysed reaction is holo-[ACP] + H2O = apo-[ACP] + (R)-4'-phosphopantetheine + H(+). Its function is as follows. Converts holo-ACP to apo-ACP by hydrolytic cleavage of the phosphopantetheine prosthetic group from ACP. The sequence is that of Acyl carrier protein phosphodiesterase from Salmonella choleraesuis (strain SC-B67).